The primary structure comprises 171 residues: Shikimate kinase (171 aa).

14–19 (GAGKST) lines the ATP pocket. Mg(2+) is bound at residue Ser-18. Substrate-binding residues include Asp-36, Arg-60, and Gly-82. Arg-120 provides a ligand contact to ATP. Arg-139 provides a ligand contact to substrate. Gln-156 is an ATP binding site.

This sequence belongs to the shikimate kinase family. Monomer. It depends on Mg(2+) as a cofactor.

It is found in the cytoplasm. The enzyme catalyses shikimate + ATP = 3-phosphoshikimate + ADP + H(+). The protein operates within metabolic intermediate biosynthesis; chorismate biosynthesis; chorismate from D-erythrose 4-phosphate and phosphoenolpyruvate: step 5/7. In terms of biological role, catalyzes the specific phosphorylation of the 3-hydroxyl group of shikimic acid using ATP as a cosubstrate. In Shewanella amazonensis (strain ATCC BAA-1098 / SB2B), this protein is Shikimate kinase.